The chain runs to 511 residues: MIWHVQNENFILDSTRIFMKAFHLLLFHGSFIFPECILIFGLILLLMIDSTSDQKDIPWLYFISSTSLVMSIAALLFRWREEPMISFSGNFQTNNFNEIFQFLILLCSTLCIPLSVEYIECTEMAITEFLLFVLTATLGGMFLCGANDLITIFVAPECFSLCSYLLSGYTKRDVRSNEATTKYLLMGGASSSILVHGFSWLYGSSGGEIELQEIVNGLINTQMYNSPGISIALIFITVGIGFKLSPAPSHQWTPDVYEGSPTPVVAFLSVTSKVAASALATRIFDIPFYFSSNEWHLLLEILAILSMILGNLIAITQTSMKRMLAYSSIGQIGYVIIGIIVGDSNDGYASMITYMLFYISMNLGTFACIVLFGLRTGTDNIRDYAGLYTKDPFLALSLALCLLSLGGLPPLAGFFGKLHLFWCGWQAGLYFLVSIGLLTSVVSIYYYLKIIKLLMTGRNQEITPHVRNYRRSPLRSNNSIELSMIVCVIASTIPGISMNPIIAIAQDTLFF.

The next 13 membrane-spanning stretches (helical) occupy residues 24–44 (LLLF…GLIL), 57–77 (IPWL…ALLF), 99–119 (IFQF…VEYI), 124–144 (MAIT…MFLC), 149–169 (LITI…LSGY), 183–203 (YLLM…WLYG), 227–247 (PGIS…LSPA), 295–315 (WHLL…LIAI), 323–343 (MLAY…IVGD), 354–374 (YMLF…LFGL), 395–415 (ALSL…AGFF), 418–438 (LHLF…IGLL), and 484–504 (MIVC…IIAI).

The protein belongs to the complex I subunit 2 family. NDH is composed of at least 16 different subunits, 5 of which are encoded in the nucleus.

It localises to the plastid. It is found in the chloroplast thylakoid membrane. It carries out the reaction a plastoquinone + NADH + (n+1) H(+)(in) = a plastoquinol + NAD(+) + n H(+)(out). It catalyses the reaction a plastoquinone + NADPH + (n+1) H(+)(in) = a plastoquinol + NADP(+) + n H(+)(out). Functionally, NDH shuttles electrons from NAD(P)H:plastoquinone, via FMN and iron-sulfur (Fe-S) centers, to quinones in the photosynthetic chain and possibly in a chloroplast respiratory chain. The immediate electron acceptor for the enzyme in this species is believed to be plastoquinone. Couples the redox reaction to proton translocation, and thus conserves the redox energy in a proton gradient. This is NAD(P)H-quinone oxidoreductase subunit 2 B, chloroplastic from Nandina domestica (Heavenly bamboo).